A 129-amino-acid polypeptide reads, in one-letter code: MKEVIDTVGRRKTSVARVFMSPGKGKIVVNKLPVEEYFKDEFKRSQALKPLAVAEKQNDFDITINVKGGGLTGQSGAVSLAIARALVEFDESIRAALRPDRLLTRDPRMVERKKYGKKKARKSFQFSKR.

The disordered stretch occupies residues 108–129 (RMVERKKYGKKKARKSFQFSKR). Residues 114–129 (KYGKKKARKSFQFSKR) are compositionally biased toward basic residues.

This sequence belongs to the universal ribosomal protein uS9 family.

In Chlorobaculum tepidum (strain ATCC 49652 / DSM 12025 / NBRC 103806 / TLS) (Chlorobium tepidum), this protein is Small ribosomal subunit protein uS9.